Consider the following 162-residue polypeptide: Ribosome maturation factor RimM (162 aa).

The PRC barrel domain maps to 90–161 (EDCYYEADIV…KIIIKPLEVW (72 aa)).

Belongs to the RimM family. Binds ribosomal protein uS19.

It is found in the cytoplasm. In terms of biological role, an accessory protein needed during the final step in the assembly of 30S ribosomal subunit, possibly for assembly of the head region. Essential for efficient processing of 16S rRNA. May be needed both before and after RbfA during the maturation of 16S rRNA. It has affinity for free ribosomal 30S subunits but not for 70S ribosomes. This is Ribosome maturation factor RimM from Clostridium novyi (strain NT).